A 354-amino-acid polypeptide reads, in one-letter code: Pyruvate dehydrogenase E1 component subunit alpha (354 aa).

The segment at 1–29 (MAKATQDSNRPHKADVGSAIPNHDLPPIP) is disordered.

In terms of assembly, heterodimer of an alpha and a beta chain. Thiamine diphosphate is required as a cofactor.

The enzyme catalyses N(6)-[(R)-lipoyl]-L-lysyl-[protein] + pyruvate + H(+) = N(6)-[(R)-S(8)-acetyldihydrolipoyl]-L-lysyl-[protein] + CO2. In terms of biological role, the pyruvate dehydrogenase complex catalyzes the overall conversion of pyruvate to acetyl-CoA and CO(2). It contains multiple copies of three enzymatic components: pyruvate dehydrogenase (E1), dihydrolipoamide acetyltransferase (E2) and lipoamide dehydrogenase (E3). In Zymomonas mobilis subsp. mobilis (strain ATCC 31821 / ZM4 / CP4), this protein is Pyruvate dehydrogenase E1 component subunit alpha (pdhA).